A 184-amino-acid polypeptide reads, in one-letter code: Large ribosomal subunit protein uL15 (184 aa).

The segment at 1-50 is disordered; sequence MDLSSLRPAKGAVKNKKRVGRGQGSGNGTTAGKGNKGQQARSGYKRPINE. Residues 21-35 show a composition bias toward gly residues; sequence RGQGSGNGTTAGKGN.

The protein belongs to the universal ribosomal protein uL15 family. As to quaternary structure, part of the 50S ribosomal subunit.

Its function is as follows. Binds to the 23S rRNA. The protein is Large ribosomal subunit protein uL15 of Chlorobium luteolum (strain DSM 273 / BCRC 81028 / 2530) (Pelodictyon luteolum).